Here is a 473-residue protein sequence, read N- to C-terminus: Photosystem II CP43 reaction center protein (473 aa).

The propeptide occupies 1–14 (MKTLYSLRRFYHVE). The residue at position 15 (Thr15) is an N-acetylthreonine. Position 15 is a phosphothreonine (Thr15). A run of 5 helical transmembrane segments spans residues 69–93 (LFEV…PHLA), 134–155 (LLGP…KDRN), 178–200 (KALY…RKIT), 255–275 (KPFA…LSYS), and 291–312 (WFNN…ASQA). [CaMn4O5] cluster is bound at residue Glu367. The chain crosses the membrane as a helical span at residues 447–471 (RARAAAAGFEKGIDRDFEPVLSMTP).

This sequence belongs to the PsbB/PsbC family. PsbC subfamily. As to quaternary structure, PSII is composed of 1 copy each of membrane proteins PsbA, PsbB, PsbC, PsbD, PsbE, PsbF, PsbH, PsbI, PsbJ, PsbK, PsbL, PsbM, PsbT, PsbX, PsbY, PsbZ, Psb30/Ycf12, at least 3 peripheral proteins of the oxygen-evolving complex and a large number of cofactors. It forms dimeric complexes. Requires Binds multiple chlorophylls and provides some of the ligands for the Ca-4Mn-5O cluster of the oxygen-evolving complex. It may also provide a ligand for a Cl- that is required for oxygen evolution. PSII binds additional chlorophylls, carotenoids and specific lipids. as cofactor.

It is found in the plastid. The protein resides in the chloroplast thylakoid membrane. Its function is as follows. One of the components of the core complex of photosystem II (PSII). It binds chlorophyll and helps catalyze the primary light-induced photochemical processes of PSII. PSII is a light-driven water:plastoquinone oxidoreductase, using light energy to abstract electrons from H(2)O, generating O(2) and a proton gradient subsequently used for ATP formation. The chain is Photosystem II CP43 reaction center protein from Phaseolus vulgaris (Kidney bean).